The chain runs to 1260 residues: Myosin-1 (1260 aa).

One can recognise a Myosin motor domain in the interval 34-713 (VGVSDLTLLS…TLFALEHMRD (680 aa)). 127-134 (GESGAGKT) is an ATP binding site. The residue at position 355 (serine 355) is a Phosphoserine. Residues 402–484 (SIGILDIYGF…PGIFATLDDS (83 aa)) form an actin-binding region. IQ domains lie at 717–737 (YNMAARIQRAWRRFIQRRIDS) and 738–763 (AIKIQRAIREKKGGNQYEQLRDYGHR). Residues 769-959 (KERRAMSLLG…TISVRQGRPA (191 aa)) enclose the TH1 domain. 2 stretches are compositionally biased toward polar residues: residues 948-963 (SSTISVRQGRPANSRQ) and 972-988 (TLLSDGPSYNSNQSKGY). The interval 948–1106 (SSTISVRQGR…PPPPTKQNIP (159 aa)) is disordered. The segment covering 989–1013 (GQQQHAQPSYGQQQQQQQRYAPQSH) has biased composition (low complexity). Residues 1030-1064 (QQNFAASAAQTAYHPQQASHARVPSTNNAHTQHNR) show a composition bias toward polar residues. The segment covering 1065 to 1082 (QPAQQAAQPVQQAAQPAA) has biased composition (low complexity). Positions 1092–1101 (APPPPPPPPT) are enriched in pro residues. Positions 1103–1165 (QNIPKFQAAY…PTNYIVEYKE (63 aa)) constitute an SH3 domain.

This sequence belongs to the TRAFAC class myosin-kinesin ATPase superfamily. Myosin family. Phosphorylation of the TEDS site (Ser-355) is required for the polarization of the actin cytoskeleton. Phosphorylation probably activates the myosin-I ATPase activity.

Its subcellular location is the cytoplasm. The protein localises to the cytoskeleton. The protein resides in the actin patch. Type-I myosin implicated in the organization of the actin cytoskeleton. Required for proper actin cytoskeleton polarization. At the cell cortex, assembles in patch-like structures together with proteins from the actin-polymerizing machinery and promotes actin assembly. Functions as actin nucleation-promoting factor (NPF) for the Arp2/3 complex. The chain is Myosin-1 (MYO1) from Kluyveromyces lactis (strain ATCC 8585 / CBS 2359 / DSM 70799 / NBRC 1267 / NRRL Y-1140 / WM37) (Yeast).